The primary structure comprises 473 residues: Gamma-aminobutyric acid receptor subunit beta-3 (473 aa).

An N-terminal signal peptide occupies residues 1–25 (MWGFAGGRLFGIFSAPVLVAVVCCA). Residues 26–246 (QSVNDPGNMS…FRLKRNIGYF (221 aa)) are Extracellular-facing. N-linked (GlcNAc...) asparagine glycosylation is found at Asn33 and Asn105. Tyr122 is a binding site for histamine. A disulfide bridge connects residues Cys161 and Cys175. N-linked (GlcNAc...) asparagine glycosylation is present at Asn174. Positions 180, 182, and 227 each coordinate 4-aminobutanoate. Histamine is bound by residues 181–182 (SY) and Thr227. A helical transmembrane segment spans residues 247–267 (ILQTYMPSILITILSWVSFWI). The Cytoplasmic segment spans residues 268–271 (NYDA). A helical transmembrane segment spans residues 272–292 (SAARVALGITTVLTMTTINTH). At 293-304 (LRETLPKIPYVK) the chain is on the extracellular side. The helical transmembrane segment at 305 to 328 (AIDMYLMGCFVFVFLALLEYAFVN) threads the bilayer. Residues 329-447 (YIFFGRGPQR…KIPDLTDVNA (119 aa)) lie on the Cytoplasmic side of the membrane. Residues 448-470 (IDRWSRIVFPFTFSLFNLVYWLY) form a helical membrane-spanning segment. Over 471–473 (YVN) the chain is Extracellular.

This sequence belongs to the ligand-gated ion channel (TC 1.A.9) family. Gamma-aminobutyric acid receptor (TC 1.A.9.5) subfamily. GABRB3 sub-subfamily. As to quaternary structure, heteropentamer, formed by a combination of alpha (GABRA1-6), beta (GABRB1-3), gamma (GABRG1-3), delta (GABRD), epsilon (GABRE), rho (GABRR1-3), pi (GABRP) and theta (GABRQ) chains, each subunit exhibiting distinct physiological and pharmacological properties. Can form functional homopentamers (in vitro). Interacts with UBQLN1. May interact with KIF21B. Identified in a complex of 720 kDa composed of LHFPL4, NLGN2, GABRA1, GABRB2, GABRG2 and GABRB3. Interacts with LHFPL4. Interacts with GIT1; this interaction is required for synaptic GABRB3 surface stability and inhibitory synapse strength.

The protein localises to the postsynaptic cell membrane. The protein resides in the cell membrane. It is found in the cytoplasmic vesicle membrane. The enzyme catalyses chloride(in) = chloride(out). Its activity is regulated as follows. Potentiated by histamine. Its function is as follows. Beta subunit of the heteropentameric ligand-gated chloride channel gated by gamma-aminobutyric acid (GABA), a major inhibitory neurotransmitter in the brain. GABA-gated chloride channels, also named GABA(A) receptors (GABAAR), consist of five subunits arranged around a central pore and contain GABA active binding site(s) located at the alpha and beta subunit interface(s). GABAARs containing beta-3/GABRB3 subunit are found at both synaptic and extrasynaptic sites. When activated by GABA, GABAARs selectively allow the flow of chloride anions across the cell membrane down their electrochemical gradient. Chloride influx into the postsynaptic neuron following GABAAR opening decreases the neuron ability to generate a new action potential, thereby reducing nerve transmission. GABAARs containing alpha-1 and beta-3 subunits exhibit synaptogenic activity; the gamma-2 subunit being necessary but not sufficient to induce rapid synaptic contacts formation. Extrasynaptic beta-3 receptors contribute to the tonic GABAergic inhibition. GABAARs containing alpha-1, beta-3 and epsilon subunits may permit spontaneous chloride channel activity while preserving the structural information required for GABA-gated openings. Beta-containing GABAARs can simultaneously bind GABA and histamine where histamine binds at the interface of two neighboring beta subunits, which may be involved in the regulation of sleep and wakefulness. Plays an important role in somatosensation and in the production of antinociception. The chain is Gamma-aminobutyric acid receptor subunit beta-3 from Mus musculus (Mouse).